The primary structure comprises 148 residues: Arginine repressor (148 aa).

The protein belongs to the ArgR family.

It localises to the cytoplasm. The protein operates within amino-acid biosynthesis; L-arginine biosynthesis [regulation]. In terms of biological role, regulates arginine biosynthesis genes. This chain is Arginine repressor, found in Koribacter versatilis (strain Ellin345).